We begin with the raw amino-acid sequence, 842 residues long: Elongation factor 2 (842 aa).

One can recognise a tr-type G domain in the interval 17-253 (TNVRNMSVIA…LWGDSYFNPK (237 aa)). GTP-binding positions include 26–33 (AHVDHGKS), 158–161 (NKVD), and 213–215 (SGL). Histidine 699 is modified (diphthamide).

It belongs to the TRAFAC class translation factor GTPase superfamily. Classic translation factor GTPase family. EF-G/EF-2 subfamily.

It is found in the cytoplasm. It carries out the reaction GTP + H2O = GDP + phosphate + H(+). In terms of biological role, catalyzes the GTP-dependent ribosomal translocation step during translation elongation. During this step, the ribosome changes from the pre-translocational (PRE) to the post-translocational (POST) state as the newly formed A-site-bound peptidyl-tRNA and P-site-bound deacylated tRNA move to the P and E sites, respectively. Catalyzes the coordinated movement of the two tRNA molecules, the mRNA and conformational changes in the ribosome. This Eremothecium gossypii (strain ATCC 10895 / CBS 109.51 / FGSC 9923 / NRRL Y-1056) (Yeast) protein is Elongation factor 2 (EFT1).